Consider the following 297-residue polypeptide: Taste receptor type 2 member 4 (297 aa).

The Extracellular portion of the chain corresponds to 1–11 (MLWELYVFVFA). The chain crosses the membrane as a helical span at residues 12–32 (ASVFLNFVGIIANLFIIVIII). At 33-46 (KTWVNSRRIASPDR) the chain is on the cytoplasmic side. The helical transmembrane segment at 47 to 67 (ILFSLAITRFLTLGLFLLNSV) threads the bilayer. The Extracellular portion of the chain corresponds to 68-80 (YIATNTGRSVYFS). Residues 81–101 (TFFLLCWKFLDANSLWLVTIL) form a helical membrane-spanning segment. Over 102–128 (NSLYCVKITNFQHPVFLLLKRTISMKT) the chain is Cytoplasmic. Residues 129–149 (TSLLLACLLISALTTLLYYML) form a helical membrane-spanning segment. Residues 150 to 171 (SQISRFPEHIIGRNDTSFDLSD) lie on the Extracellular side of the membrane. N163 carries an N-linked (GlcNAc...) asparagine glycan. Residues 172-192 (GILTLVASLVLNSLLQFMLNV) form a helical membrane-spanning segment. Residues 193–229 (TFASLLIHSLRRHIQKMQRNRTSFWNPQTEAHMGAMR) lie on the Cytoplasmic side of the membrane. The chain crosses the membrane as a helical span at residues 230 to 250 (LMICFLVLYIPYSIATLLYLP). The Extracellular portion of the chain corresponds to 251-260 (SYMRKNLRAQ). The helical transmembrane segment at 261–281 (AICMIITAAYPPGHSVLLIIT) threads the bilayer. The Cytoplasmic portion of the chain corresponds to 282–297 (HHKLKAKAKKIFCFYK).

Belongs to the G-protein coupled receptor T2R family. In terms of tissue distribution, expressed in subsets of taste receptor cells of the tongue and palate epithelium and exclusively in gustducin-positive cells. Expressed in 15% taste bud cells in circumvallate and foliate papillae but only in 2% in fungiform papillae.

It is found in the membrane. The protein resides in the cell projection. Its subcellular location is the cilium membrane. Functionally, gustducin-coupled receptor for denatonium and N(6)-propyl-2-thiouracil implicated in the perception of bitter compounds in the oral cavity and the gastrointestinal tract. Signals through PLCB2 and the calcium-regulated cation channel TRPM5. In airway epithelial cells, binding of denatonium increases the intracellular calcium ion concentration and stimulates ciliary beat frequency. This chain is Taste receptor type 2 member 4 (Tas2r4), found in Mus musculus (Mouse).